A 228-amino-acid polypeptide reads, in one-letter code: Isoprenyl transferase (228 aa).

Residue D15 is part of the active site. Position 15 (D15) interacts with Mg(2+). Substrate is bound by residues 16-19, W20, R28, H32, and 60-62; these read GNGR and STE. N63 functions as the Proton acceptor in the catalytic mechanism. Residues W64, R66, R176, and 182-184 each bind substrate; that span reads RLS. A Mg(2+)-binding site is contributed by E195.

This sequence belongs to the UPP synthase family. Homodimer. Mg(2+) serves as cofactor.

Catalyzes the condensation of isopentenyl diphosphate (IPP) with allylic pyrophosphates generating different type of terpenoids. The chain is Isoprenyl transferase from Wolinella succinogenes (strain ATCC 29543 / DSM 1740 / CCUG 13145 / JCM 31913 / LMG 7466 / NCTC 11488 / FDC 602W) (Vibrio succinogenes).